The primary structure comprises 340 residues: Heat-inducible transcription repressor HrcA (340 aa).

This sequence belongs to the HrcA family.

In terms of biological role, negative regulator of class I heat shock genes (grpE-dnaK-dnaJ and groELS operons). Prevents heat-shock induction of these operons. The protein is Heat-inducible transcription repressor HrcA of Mycoplasmopsis synoviae (strain 53) (Mycoplasma synoviae).